Reading from the N-terminus, the 233-residue chain is Large ribosomal subunit protein uL1 (233 aa).

This sequence belongs to the universal ribosomal protein uL1 family. In terms of assembly, part of the 50S ribosomal subunit.

In terms of biological role, binds directly to 23S rRNA. The L1 stalk is quite mobile in the ribosome, and is involved in E site tRNA release. Functionally, protein L1 is also a translational repressor protein, it controls the translation of the L11 operon by binding to its mRNA. This Novosphingobium aromaticivorans (strain ATCC 700278 / DSM 12444 / CCUG 56034 / CIP 105152 / NBRC 16084 / F199) protein is Large ribosomal subunit protein uL1.